The primary structure comprises 451 residues: Exodeoxyribonuclease 7 large subunit (451 aa).

The protein belongs to the XseA family. Heterooligomer composed of large and small subunits.

It localises to the cytoplasm. The enzyme catalyses Exonucleolytic cleavage in either 5'- to 3'- or 3'- to 5'-direction to yield nucleoside 5'-phosphates.. In terms of biological role, bidirectionally degrades single-stranded DNA into large acid-insoluble oligonucleotides, which are then degraded further into small acid-soluble oligonucleotides. The polypeptide is Exodeoxyribonuclease 7 large subunit (Thiobacillus denitrificans (strain ATCC 25259 / T1)).